Consider the following 505-residue polypeptide: GDP-Man:Man(3)GlcNAc(2)-PP-Dol alpha-1,2-mannosyltransferase (505 aa).

Over 1–4 the chain is Lumenal; it reads MSTM. The helical transmembrane segment at 5 to 25 threads the bilayer; the sequence is LWVVVAAVLLFVLPVVRVPML. Residues 26–130 are Cytoplasmic-facing; that stretch reads DLTRRNIIRW…KWVDGSTWKH (105 aa). Positions 131 to 151 form an intramembrane region, helical; it reads LTLVGQAMGSMLLTIEALLRF. The Cytoplasmic portion of the chain corresponds to 152–374; sequence VPDIWLDTMG…FGINAMWNEH (223 aa). An intramembrane region (helical) is located at residues 375 to 395; it reads FGIAVVEYAAAGLISLVHASA. The Cytoplasmic portion of the chain corresponds to 396 to 505; the sequence is GPLLDIIVPW…EHKTSRLGSN (110 aa).

Belongs to the glycosyltransferase group 1 family.

It is found in the endoplasmic reticulum membrane. The enzyme catalyses an alpha-D-Man-(1-&gt;3)-[alpha-D-Man-(1-&gt;6)]-beta-D-Man-(1-&gt;4)-beta-D-GlcNAc-(1-&gt;4)-alpha-D-GlcNAc-diphospho-di-trans,poly-cis-dolichol + 2 GDP-alpha-D-mannose = an alpha-D-Man-(1-&gt;2)-alpha-D-Man-(1-&gt;2)-alpha-D-Man-(1-&gt;3)-[alpha-D-Man-(1-&gt;6)]-beta-D-Man-(1-&gt;4)-beta-D-GlcNAc-(1-&gt;4)-alpha-D-GlcNAc-diphospho-di-trans,poly-cis-dolichol + 2 GDP + 2 H(+). Its pathway is protein modification; protein glycosylation. Functionally, GDP-Man:Man(3)GlcNAc(2)-PP-Dol alpha-1,2-mannosyltransferase that operates in the biosynthetic pathway of dolichol-linked oligosaccharides, the glycan precursors employed in protein asparagine (N)-glycosylation. The assembly of dolichol-linked oligosaccharides begins on the cytosolic side of the endoplasmic reticulum membrane and finishes in its lumen. The sequential addition of sugars to dolichol pyrophosphate produces dolichol-linked oligosaccharides containing fourteen sugars, including two GlcNAcs, nine mannoses and three glucoses. Once assembled, the oligosaccharide is transferred from the lipid to nascent proteins by oligosaccharyltransferases. Catalyzes, on the cytoplasmic face of the endoplasmic reticulum, the addition of the fourth and fifth mannose residues to the dolichol-linked oligosaccharide chain, to produce Man(5)GlcNAc(2)-PP-dolichol core oligosaccharide. This is GDP-Man:Man(3)GlcNAc(2)-PP-Dol alpha-1,2-mannosyltransferase (ALG11) from Candida glabrata (strain ATCC 2001 / BCRC 20586 / JCM 3761 / NBRC 0622 / NRRL Y-65 / CBS 138) (Yeast).